Consider the following 314-residue polypeptide: Aspartate carbamoyltransferase catalytic subunit (314 aa).

Residues Arg-58 and Thr-59 each contribute to the carbamoyl phosphate site. Lys-86 lines the L-aspartate pocket. 3 residues coordinate carbamoyl phosphate: Arg-108, His-136, and Gln-139. Residues Arg-169 and Arg-223 each coordinate L-aspartate. 2 residues coordinate carbamoyl phosphate: Gly-264 and Pro-265.

It belongs to the aspartate/ornithine carbamoyltransferase superfamily. ATCase family. As to quaternary structure, heterododecamer (2C3:3R2) of six catalytic PyrB chains organized as two trimers (C3), and six regulatory PyrI chains organized as three dimers (R2).

The enzyme catalyses carbamoyl phosphate + L-aspartate = N-carbamoyl-L-aspartate + phosphate + H(+). It participates in pyrimidine metabolism; UMP biosynthesis via de novo pathway; (S)-dihydroorotate from bicarbonate: step 2/3. In terms of biological role, catalyzes the condensation of carbamoyl phosphate and aspartate to form carbamoyl aspartate and inorganic phosphate, the committed step in the de novo pyrimidine nucleotide biosynthesis pathway. This Roseobacter denitrificans (strain ATCC 33942 / OCh 114) (Erythrobacter sp. (strain OCh 114)) protein is Aspartate carbamoyltransferase catalytic subunit.